The following is an 862-amino-acid chain: Protein SEY1 (862 aa).

Over 1-747 the chain is Cytoplasmic; that stretch reads MVSNGHFASA…KRSAIGGMTQ (747 aa). One can recognise a GB1/RHD3-type G domain in the interval 49 to 306; the sequence is GFNYHLISVF…IPADGFAVYA (258 aa). Position 59–66 (59–66) interacts with GTP; that stretch reads GSQSTGKS. Positions 481–507 form a coiled coil; the sequence is SNYTQELALYQKDLEKISAQLRKDEMR. A helical membrane pass occupies residues 748-768; the sequence is IPVYFYILLLALGWNEIVAVL. Over 769–771 the chain is Lumenal; sequence RNP. Residues 772–792 form a helical membrane-spanning segment; it reads LYFFMLFLCAVGAFVTYQLNL. Residues 793–862 are Cytoplasmic-facing; the sequence is WGPMIKMAEA…DDDDEDEGSW (70 aa). The interval 819 to 862 is disordered; sequence LEPSEAGPHAARYKNSTEEYEMSNVKAPQRTNSGDDDDEDEGSW. The span at 852-862 shows a compositional bias: acidic residues; the sequence is GDDDDEDEGSW.

Belongs to the TRAFAC class dynamin-like GTPase superfamily. GB1/RHD3 GTPase family. RHD3 subfamily.

The protein resides in the endoplasmic reticulum membrane. Cooperates with the reticulon proteins and tubule-shaping DP1 family proteins to generate and maintain the structure of the tubular endoplasmic reticulum network. Has GTPase activity, which is required for its function in ER organization. This chain is Protein SEY1, found in Uncinocarpus reesii (strain UAMH 1704).